The sequence spans 227 residues: Ribose-5-phosphate isomerase A (227 aa).

Residues 30-33, 86-89, and 99-104 contribute to the substrate site; these read TGST, DGAD, and KGMGGA. E108 functions as the Proton acceptor in the catalytic mechanism. K126 contacts substrate.

This sequence belongs to the ribose 5-phosphate isomerase family. In terms of assembly, homodimer.

It carries out the reaction aldehydo-D-ribose 5-phosphate = D-ribulose 5-phosphate. It participates in carbohydrate degradation; pentose phosphate pathway; D-ribose 5-phosphate from D-ribulose 5-phosphate (non-oxidative stage): step 1/1. In terms of biological role, involved in the first step of the non-oxidative branch of the pentose phosphate pathway. It catalyzes the reversible conversion of ribose-5-phosphate to ribulose 5-phosphate. Can also act on D-ribose-5-diphosphate and D-ribose-5-triphosphate as substrate. This Thermus thermophilus (strain ATCC BAA-163 / DSM 7039 / HB27) protein is Ribose-5-phosphate isomerase A.